A 277-amino-acid polypeptide reads, in one-letter code: Probable diphthine methyl ester synthase (277 aa).

S-adenosyl-L-methionine contacts are provided by residues Leu-9, Asp-89, Gly-92, 117-118 (SV), Leu-168, Leu-227, and His-252.

The protein belongs to the diphthine synthase family.

It catalyses the reaction 2-[(3S)-amino-3-carboxypropyl]-L-histidyl-[translation elongation factor 2] + 4 S-adenosyl-L-methionine = diphthine methyl ester-[translation elongation factor 2] + 4 S-adenosyl-L-homocysteine + 3 H(+). The protein operates within protein modification; peptidyl-diphthamide biosynthesis. In terms of biological role, S-adenosyl-L-methionine-dependent methyltransferase that catalyzes four methylations of the modified target histidine residue in translation elongation factor 2 (EF-2), to form an intermediate called diphthine methyl ester. The four successive methylation reactions represent the second step of diphthamide biosynthesis. This chain is Probable diphthine methyl ester synthase, found in Arabidopsis thaliana (Mouse-ear cress).